A 177-amino-acid polypeptide reads, in one-letter code: 3-hydroxydecanoyl-[acyl-carrier-protein] dehydratase (177 aa).

Residue His71 is part of the active site.

The protein belongs to the thioester dehydratase family. FabA subfamily. Homodimer.

The protein resides in the cytoplasm. The catalysed reaction is a (3R)-hydroxyacyl-[ACP] = a (2E)-enoyl-[ACP] + H2O. The enzyme catalyses (3R)-hydroxydecanoyl-[ACP] = (2E)-decenoyl-[ACP] + H2O. It carries out the reaction (2E)-decenoyl-[ACP] = (3Z)-decenoyl-[ACP]. The protein operates within lipid metabolism; fatty acid biosynthesis. Functionally, necessary for the introduction of cis unsaturation into fatty acids. Catalyzes the dehydration of (3R)-3-hydroxydecanoyl-ACP to E-(2)-decenoyl-ACP and then its isomerization to Z-(3)-decenoyl-ACP. Can catalyze the dehydratase reaction for beta-hydroxyacyl-ACPs with saturated chain lengths up to 16:0, being most active on intermediate chain length. The protein is 3-hydroxydecanoyl-[acyl-carrier-protein] dehydratase of Wigglesworthia glossinidia brevipalpis.